A 63-amino-acid chain; its full sequence is Odorranain-B1 (63 aa).

The signal sequence occupies residues M1 to C22. Positions E23–V41 are excised as a propeptide.

This sequence belongs to the frog skin active peptide (FSAP) family. Brevinin subfamily. As to expression, expressed by the skin glands.

It is found in the secreted. This Odorrana hainanensis (Odor frog) protein is Odorranain-B1.